The following is a 297-amino-acid chain: Formamidopyrimidine-DNA glycosylase (297 aa).

Pro-2 (schiff-base intermediate with DNA) is an active-site residue. Glu-3 acts as the Proton donor in catalysis. Lys-58 acts as the Proton donor; for beta-elimination activity in catalysis. DNA-binding residues include His-104, Arg-127, and Lys-170. The FPG-type zinc finger occupies 261–297 (SVYDREGKPCRKEGCSGTIQRFVQGGRSTFYCPICQR). Arg-287 functions as the Proton donor; for delta-elimination activity in the catalytic mechanism.

It belongs to the FPG family. As to quaternary structure, monomer. The cofactor is Zn(2+).

It carries out the reaction Hydrolysis of DNA containing ring-opened 7-methylguanine residues, releasing 2,6-diamino-4-hydroxy-5-(N-methyl)formamidopyrimidine.. The catalysed reaction is 2'-deoxyribonucleotide-(2'-deoxyribose 5'-phosphate)-2'-deoxyribonucleotide-DNA = a 3'-end 2'-deoxyribonucleotide-(2,3-dehydro-2,3-deoxyribose 5'-phosphate)-DNA + a 5'-end 5'-phospho-2'-deoxyribonucleoside-DNA + H(+). In terms of biological role, involved in base excision repair of DNA damaged by oxidation or by mutagenic agents. Acts as a DNA glycosylase that recognizes and removes damaged bases. Has a preference for oxidized purines, such as 7,8-dihydro-8-oxoguanine (8-oxoG). Has AP (apurinic/apyrimidinic) lyase activity and introduces nicks in the DNA strand. Cleaves the DNA backbone by beta-delta elimination to generate a single-strand break at the site of the removed base with both 3'- and 5'-phosphates. The polypeptide is Formamidopyrimidine-DNA glycosylase (Chelativorans sp. (strain BNC1)).